We begin with the raw amino-acid sequence, 60 residues long: Large ribosomal subunit protein uL30 (60 aa).

This sequence belongs to the universal ribosomal protein uL30 family. Part of the 50S ribosomal subunit.

The polypeptide is Large ribosomal subunit protein uL30 (Lysinibacillus sphaericus (strain C3-41)).